Consider the following 362-residue polypeptide: Peptide chain release factor 1 (362 aa).

An N5-methylglutamine modification is found at glutamine 237.

Belongs to the prokaryotic/mitochondrial release factor family. In terms of processing, methylated by PrmC. Methylation increases the termination efficiency of RF1.

The protein resides in the cytoplasm. Peptide chain release factor 1 directs the termination of translation in response to the peptide chain termination codons UAG and UAA. The polypeptide is Peptide chain release factor 1 (Vibrio campbellii (strain ATCC BAA-1116)).